We begin with the raw amino-acid sequence, 673 residues long: RAS guanyl-releasing protein 4 (673 aa).

Composition is skewed to basic residues over residues methionine 1–serine 10 and glycine 20–threonine 32. Disordered stretches follow at residues methionine 1–proline 34 and leucine 164–glycine 188. The N-terminal Ras-GEF domain maps to glycine 49 to glycine 175. Low complexity predominate over residues leucine 164–proline 173. The 232-residue stretch at glutamate 201 to arginine 432 folds into the Ras-GEF domain. In terms of domain architecture, EF-hand spans histidine 466–alanine 501. The Phorbol-ester/DAG-type zinc-finger motif lies at leucine 540–cysteine 590. Positions lysine 592 to serine 633 are disordered.

It belongs to the RASGRP family. As to expression, expressed by mast cells and their progenitors (at protein level). Expressed by dendritic cells. In terms of tissue distribution, expressed in neutrophils.

The protein resides in the cytoplasm. Its subcellular location is the cell membrane. Functions as a cation- and diacylglycerol (DAG)-regulated nucleotide exchange factor activating Ras through the exchange of bound GDP for GTP. In neutrophils, participates in a phospholipase C-activating N-formyl peptide-activated GPCR (G protein-coupled receptor) signaling pathway by promoting Ras-mediated activation of PIK3CG/PI3Kgamma to promote neutrophil functional responses. In CD117(+) dendritic cells and mast cells, participates in an lipopolysaccharide (LPS)-activated signaling pathway that stimulates the production of interferon-gamma and other pro-inflammatory cytokines by natural killer (NK) cells. May function in mast cell differentiation. Does not appear to be required for the development of B-cells, DC-cells, T-cells, or NK-cells. Functionally, binds diacylglycerol (DAG). Its function is as follows. Unable to bind diacylglycerol (DAG). The sequence is that of RAS guanyl-releasing protein 4 (Rasgrp4) from Mus musculus (Mouse).